Reading from the N-terminus, the 88-residue chain is MTRMVQCVRLGREAEGLPRPPYPGELGKRIYENVSKEAWQEWLRHQTMLINEYRLTPVEPRARQFLEKEMENFFFGDGSSAPPDYQPE.

This sequence belongs to the Fe(2+)-trafficking protein family.

Functionally, could be a mediator in iron transactions between iron acquisition and iron-requiring processes, such as synthesis and/or repair of Fe-S clusters in biosynthetic enzymes. This chain is Probable Fe(2+)-trafficking protein, found in Alkalilimnicola ehrlichii (strain ATCC BAA-1101 / DSM 17681 / MLHE-1).